The sequence spans 182 residues: Adenine phosphoribosyltransferase (182 aa).

This sequence belongs to the purine/pyrimidine phosphoribosyltransferase family. As to quaternary structure, homodimer.

It is found in the cytoplasm. It catalyses the reaction AMP + diphosphate = 5-phospho-alpha-D-ribose 1-diphosphate + adenine. Its pathway is purine metabolism; AMP biosynthesis via salvage pathway; AMP from adenine: step 1/1. Catalyzes a salvage reaction resulting in the formation of AMP, that is energically less costly than de novo synthesis. This is Adenine phosphoribosyltransferase from Streptomyces coelicolor (strain ATCC BAA-471 / A3(2) / M145).